The following is a 698-amino-acid chain: Sulfhydryl oxidase 2 (698 aa).

The signal sequence occupies residues 1–21 (MAAAGAAVARSPGIGAGPALR). The Thioredoxin domain occupies 34-178 (PRLLVLLAAA…RQTMIDFLQN (145 aa)). Asn77 carries N-linked (GlcNAc...) asparagine glycosylation. Residues Cys91 and Cys94 each act as nucleophile in the active site. Disulfide bonds link Cys91/Cys94 and Cys122/Cys131. Asn178, Asn218, and Asn266 each carry an N-linked (GlcNAc...) asparagine glycan. Cys418 and Cys430 are joined by a disulfide. One can recognise an ERV/ALR sulfhydryl oxidase domain in the interval 421–530 (SRSELRGYPC…EDPRFPKLQW (110 aa)). Residues Arg426, Trp433, His437, Glu478, His482, 505–512 (WKKHNMVN), Lys527, and Trp530 each bind FAD. A disulfide bond links Cys476 and Cys479. An intrachain disulfide couples Cys536 to Cys539. Residues 570 to 624 (TYSADQGDSSEGGTLARGEEEEKRLTPPEVSHGDRDTQSVRPPGALGPRPALPES) are disordered. Residues 572-581 (SADQGDSSEG) are compositionally biased toward polar residues. Ser579 is subject to Phosphoserine. Residues 586–607 (RGEEEEKRLTPPEVSHGDRDTQ) show a composition bias toward basic and acidic residues. Low complexity predominate over residues 610–622 (RPPGALGPRPALP). Residues 662 to 682 (SLCVVLYVASSLFLMVMYFFF) traverse the membrane as a helical segment.

This sequence belongs to the quiescin-sulfhydryl oxidase (QSOX) family. FAD serves as cofactor. In terms of tissue distribution, expressed in pancreas, brain, placenta, kidney, heart and fetal tissues. Weakly expressed in lung, liver and skeletal muscles.

It is found in the membrane. It localises to the secreted. Its subcellular location is the cell membrane. The protein localises to the nucleus membrane. The catalysed reaction is 2 R'C(R)SH + O2 = R'C(R)S-S(R)CR' + H2O2. In terms of biological role, catalyzes the oxidation of sulfhydryl groups in peptide and protein thiols to disulfides with the reduction of oxygen to hydrogen peroxide. May contribute to disulfide bond formation in a variety of secreted proteins. Also seems to play a role in regulating the sensitization of neuroblastoma cells for interferon-gamma-induced apoptosis. This chain is Sulfhydryl oxidase 2 (QSOX2), found in Homo sapiens (Human).